Consider the following 376-residue polypeptide: Arginine/serine-rich coiled-coil protein 2 (376 aa).

The interval 1-171 (MIRTNFLLKQ…PSPPPFRGRN (171 aa)) is disordered. Residues 13 to 52 (RHESKDKSSKRHKSEEHNDKEHSSDKGRERLNSSENGEDR) show a composition bias toward basic and acidic residues. Ser-45 is subject to Phosphoserine. Basic residues predominate over residues 53 to 155 (HKRKERKSSR…KRIEKPRRFS (103 aa)). Residues 171–214 (NTAMDAQEALARRLERAKKLQEQREKEMVEKQKQQEMAAAAAAT) are a coiled coil. Residue Lys-317 forms a Glycyl lysine isopeptide (Lys-Gly) (interchain with G-Cter in SUMO1); alternate linkage. A Glycyl lysine isopeptide (Lys-Gly) (interchain with G-Cter in SUMO2); alternate cross-link involves residue Lys-317. Ser-318 bears the Phosphoserine mark.

Belongs to the RSRC2 family.

This Rattus norvegicus (Rat) protein is Arginine/serine-rich coiled-coil protein 2 (Rsrc2).